A 219-amino-acid chain; its full sequence is Glutamine transport system permease protein GlnP (219 aa).

The Periplasmic segment spans residues 1–22 (MQFDWSAIWPAIPLLIEGAKMT). One can recognise an ABC transmembrane type-1 domain in the interval 19–209 (AKMTLWISVL…IITLVLSFIL (191 aa)). A helical membrane pass occupies residues 23–43 (LWISVLGLAGGLVIGLLAGFA). The Cytoplasmic segment spans residues 44-53 (RTFGGWIANH). A helical membrane pass occupies residues 54-74 (VALVFIEVIRGTPIVVQVMFI). The Periplasmic segment spans residues 75–88 (YFALPMAFNDLRID). Residues 89 to 109 (PFTAAVVTIMINSGAYIAEIT) form a helical membrane-spanning segment. Residues 110–150 (RGAVLSIHKGFREAGLALGLSRWETIRYVILPLALRRMLPP) lie on the Cytoplasmic side of the membrane. The chain crosses the membrane as a helical span at residues 151-171 (LGNQWIISIKDTSLFIVIGVA). Over 172–187 (ELTRQGQEIIAGNFRA) the chain is Periplasmic. Residues 188–208 (LEIWSAVAVFYLIITLVLSFI) traverse the membrane as a helical segment. The Cytoplasmic portion of the chain corresponds to 209-219 (LRRLERRMKIL).

Belongs to the binding-protein-dependent transport system permease family. HisMQ subfamily.

It is found in the cell inner membrane. Its function is as follows. Part of the binding-protein-dependent transport system for glutamine; probably responsible for the translocation of the substrate across the membrane. The sequence is that of Glutamine transport system permease protein GlnP (glnP) from Escherichia coli O6:H1 (strain CFT073 / ATCC 700928 / UPEC).